An 83-amino-acid chain; its full sequence is Large ribosomal subunit protein bL27 (83 aa).

This sequence belongs to the bacterial ribosomal protein bL27 family.

In Bifidobacterium adolescentis (strain ATCC 15703 / DSM 20083 / NCTC 11814 / E194a), this protein is Large ribosomal subunit protein bL27.